Here is a 111-residue protein sequence, read N- to C-terminus: Universal stress protein B (111 aa).

2 helical membrane passes run 1–21 (MIST…NMAR) and 90–110 (FLLT…LMIW).

It belongs to the universal stress protein B family.

It localises to the cell inner membrane. The sequence is that of Universal stress protein B from Salmonella arizonae (strain ATCC BAA-731 / CDC346-86 / RSK2980).